Here is a 141-residue protein sequence, read N- to C-terminus: Large ribosomal subunit protein uL14 (141 aa).

It belongs to the universal ribosomal protein uL14 family. As to quaternary structure, part of the 50S ribosomal subunit. Forms a cluster with proteins L3 and L24e, part of which may contact the 16S rRNA in 2 intersubunit bridges.

Functionally, binds to 23S rRNA. Forms part of two intersubunit bridges in the 70S ribosome. This Pyrococcus abyssi (strain GE5 / Orsay) protein is Large ribosomal subunit protein uL14.